Consider the following 424-residue polypeptide: uncharacterized protein (424 aa).

Helical transmembrane passes span 9-29 (ITWI…GILI), 41-61 (ASLF…GTLA), 86-106 (GAIL…IIAL), 119-139 (ADWQ…LLHM), 148-168 (ISTL…AVSL), 184-204 (WSAA…WEMI), 222-242 (LFLA…VTVG), 270-290 (VTVC…IAGF), 320-340 (VLTA…LFQI), 345-365 (LLKG…AAAL), and 377-397 (MALG…WALL).

The protein belongs to the amino acid-polyamine-organocation (APC) superfamily.

The protein localises to the cell membrane. This is an uncharacterized protein from Bacillus subtilis (strain 168).